Consider the following 487-residue polypeptide: 3-octaprenyl-4-hydroxybenzoate carboxy-lyase (487 aa).

Position 172 (asparagine 172) interacts with Mn(2+). Prenylated FMN is bound by residues 175-177, 189-191, and 194-195; these read IYR, RWL, and RG. Residue glutamate 238 participates in Mn(2+) binding. Aspartate 287 acts as the Proton donor in catalysis.

It belongs to the UbiD family. As to quaternary structure, homohexamer. Requires prenylated FMN as cofactor. Mn(2+) is required as a cofactor.

Its subcellular location is the cell membrane. The enzyme catalyses a 4-hydroxy-3-(all-trans-polyprenyl)benzoate + H(+) = a 2-(all-trans-polyprenyl)phenol + CO2. It functions in the pathway cofactor biosynthesis; ubiquinone biosynthesis. Catalyzes the decarboxylation of 3-octaprenyl-4-hydroxy benzoate to 2-octaprenylphenol, an intermediate step in ubiquinone biosynthesis. The sequence is that of 3-octaprenyl-4-hydroxybenzoate carboxy-lyase from Actinobacillus pleuropneumoniae serotype 3 (strain JL03).